The sequence spans 234 residues: Leucyl/phenylalanyl-tRNA--protein transferase (234 aa).

The protein belongs to the L/F-transferase family.

Its subcellular location is the cytoplasm. It carries out the reaction N-terminal L-lysyl-[protein] + L-leucyl-tRNA(Leu) = N-terminal L-leucyl-L-lysyl-[protein] + tRNA(Leu) + H(+). The enzyme catalyses N-terminal L-arginyl-[protein] + L-leucyl-tRNA(Leu) = N-terminal L-leucyl-L-arginyl-[protein] + tRNA(Leu) + H(+). The catalysed reaction is L-phenylalanyl-tRNA(Phe) + an N-terminal L-alpha-aminoacyl-[protein] = an N-terminal L-phenylalanyl-L-alpha-aminoacyl-[protein] + tRNA(Phe). Functions in the N-end rule pathway of protein degradation where it conjugates Leu, Phe and, less efficiently, Met from aminoacyl-tRNAs to the N-termini of proteins containing an N-terminal arginine or lysine. In Salmonella arizonae (strain ATCC BAA-731 / CDC346-86 / RSK2980), this protein is Leucyl/phenylalanyl-tRNA--protein transferase.